The sequence spans 287 residues: U-megalopygitoxin(8)-Mc8 (287 aa).

The N-terminal stretch at 1 to 17 is a signal peptide; it reads MYLQYLVLSLFSTTVYG.

The protein belongs to the caterpillar 8 family. Contains 2 disulfide bonds. As to expression, expressed by the venom apparatus.

The protein resides in the secreted. Probable toxin. The protein is U-megalopygitoxin(8)-Mc8 of Megalopyge crispata (Black-waved flannel moth).